The following is a 122-amino-acid chain: Protein FLORAL ORGAN NUMBER2 (122 aa).

An N-terminal signal peptide occupies residues 1-25 (MGRLFLCLVVAWCWVALLLVAPVHG). The disordered stretch occupies residues 28–122 (GLPGEFSGDQ…PEHARSTGRP (95 aa)). Over residues 54–63 (KQPRGVKGTR) the composition is skewed to basic residues. Residues 64–77 (RPSWSSWSSTASRS) show a composition bias toward low complexity. The segment covering 111-122 (RRPEHARSTGRP) has biased composition (basic and acidic residues).

This sequence belongs to the CLV3/ESR signal peptide family.

Its subcellular location is the secreted. Functionally, probable extracellular signal that regulates meristem maintenance. May function as a putative ligand for a receptor complex including FON1. Regulates the size of the floral meristem and the number of floral organs. The sequence is that of Protein FLORAL ORGAN NUMBER2 (FON2) from Oryza sativa subsp. indica (Rice).